The sequence spans 294 residues: tRNA dimethylallyltransferase (294 aa).

10-17 (GPTAVGKT) serves as a coordination point for ATP. 12–17 (TAVGKT) is a substrate binding site. The interval 35–38 (DSQQ) is interaction with substrate tRNA.

It belongs to the IPP transferase family. Monomer. It depends on Mg(2+) as a cofactor.

The catalysed reaction is adenosine(37) in tRNA + dimethylallyl diphosphate = N(6)-dimethylallyladenosine(37) in tRNA + diphosphate. Catalyzes the transfer of a dimethylallyl group onto the adenine at position 37 in tRNAs that read codons beginning with uridine, leading to the formation of N6-(dimethylallyl)adenosine (i(6)A). The chain is tRNA dimethylallyltransferase from Streptococcus pneumoniae serotype 19F (strain G54).